The primary structure comprises 344 residues: DNA polymerase IV (344 aa).

The UmuC domain maps to 2–183; it reads IMLIDFDYFF…IKINDIPGIG (182 aa). Mg(2+)-binding residues include aspartate 6 and aspartate 105. Residue glutamate 106 is part of the active site.

The protein belongs to the DNA polymerase type-Y family. Monomer. Requires Mg(2+) as cofactor.

Its subcellular location is the cytoplasm. The catalysed reaction is DNA(n) + a 2'-deoxyribonucleoside 5'-triphosphate = DNA(n+1) + diphosphate. Its function is as follows. Poorly processive, error-prone DNA polymerase involved in untargeted mutagenesis. Copies undamaged DNA at stalled replication forks, which arise in vivo from mismatched or misaligned primer ends. These misaligned primers can be extended by PolIV. Exhibits no 3'-5' exonuclease (proofreading) activity. May be involved in translesional synthesis. The chain is DNA polymerase IV from Picrophilus torridus (strain ATCC 700027 / DSM 9790 / JCM 10055 / NBRC 100828 / KAW 2/3).